Reading from the N-terminus, the 431-residue chain is PHD finger-containing protein 1 (431 aa).

The PHD-type zinc-finger motif lies at 7-59 (GPVCQTCGDIGFEEALVFCDSCMFESIHRYCLGITPIPFTEYITWICEDCDNS). 8 residues coordinate Zn(2+): C10, C13, C25, C28, H34, C37, C53, and C56. The tract at residues 125 to 221 (EAADSSSVPD…QESSDSRKPH (97 aa)) is disordered. Positions 128–139 (DSSSVPDHSSCT) are enriched in polar residues. Basic residues predominate over residues 160-171 (KKKKKKKKKKSI). The segment covering 191–202 (VVEPVEVSSSSP) has biased composition (low complexity). Positions 205–221 (ETMESKRQESSDSRKPH) are enriched in basic and acidic residues.

Interacts directly with AIPP3/BDT1.

Its function is as follows. Together with AIPP3/BDT1, cooperates to form a BAH-PHD bivalent histone reader complex able to read histone H3 lysine 27 trimethylation (H3K27me3) histone marks in order to regulate transcription, especially to prevent early flowering; promotes AIPP3/BDT1 binding to H3K27me3. The sequence is that of PHD finger-containing protein 1 from Arabidopsis thaliana (Mouse-ear cress).